Consider the following 247-residue polypeptide: ATP synthase subunit a, chloroplastic (247 aa).

5 helical membrane passes run 38 to 58, 95 to 115, 134 to 154, 199 to 219, and 220 to 240; these read QVLI…IIAV, VPFI…GALL, INTT…AGLS, LVVV…VMFL, and GLFT…AYIG.

This sequence belongs to the ATPase A chain family. As to quaternary structure, F-type ATPases have 2 components, CF(1) - the catalytic core - and CF(0) - the membrane proton channel. CF(1) has five subunits: alpha(3), beta(3), gamma(1), delta(1), epsilon(1). CF(0) has four main subunits: a, b, b' and c.

Its subcellular location is the plastid. The protein resides in the chloroplast thylakoid membrane. Key component of the proton channel; it plays a direct role in the translocation of protons across the membrane. This Oryza nivara (Indian wild rice) protein is ATP synthase subunit a, chloroplastic.